Here is a 232-residue protein sequence, read N- to C-terminus: Glutathione-specific gamma-glutamylcyclotransferase (232 aa).

10–15 (VLGYGS) is a binding site for substrate. Catalysis depends on E115, which acts as the Proton acceptor.

It belongs to the gamma-glutamylcyclotransferase family. ChaC subfamily.

It is found in the cytoplasm. Its subcellular location is the nucleus. It catalyses the reaction glutathione = L-cysteinylglycine + 5-oxo-L-proline. Its function is as follows. Catalyzes the cleavage of glutathione into 5-oxo-L-proline and a Cys-Gly dipeptide. Acts specifically on glutathione, but not on other gamma-glutamyl peptides. Allows utilization of gluthathione through subsequent cleavage of the Cys-Gly dipeptide by Cys-Gly metallodipeptidase DUG1. The chain is Glutathione-specific gamma-glutamylcyclotransferase from Saccharomyces cerevisiae (strain ATCC 204508 / S288c) (Baker's yeast).